Reading from the N-terminus, the 531-residue chain is Multidrug resistance protein fnx1 (531 aa).

The Cytoplasmic portion of the chain corresponds to 1-30 (MVDQVNLATEQTSLLYPEVSRKKEELSVNK). The helical transmembrane segment at 31 to 51 (WTILPALWVGGFLSALDMTIV) threads the bilayer. The Lumenal segment spans residues 52–225 (ASLYPVIGSE…NASLLSRIDY (174 aa)). Residues 226 to 246 (LGSFLLVTGITALVVTFNMGG) form a helical membrane-spanning segment. The Cytoplasmic segment spans residues 247 to 252 (DAFPWV). Residues 253 to 273 (SPVIITLLVSSVLILFAFYWV) traverse the membrane as a helical segment. Residues 274 to 297 (EKNIAVEPIAPVEILSQPTPLNVC) are Lumenal-facing. A helical membrane pass occupies residues 298-318 (LGNFFNAFCSFVIVYELPLFF). Topologically, residues 319–360 (ETTLLMPSSEAGVRIFPYVISTSVGSLCSGLYMKKTGRYRNL) are cytoplasmic. The chain crosses the membrane as a helical span at residues 361–381 (VIAGFFFMLMGIVSFAVLTSF). Over 382–385 (GHRT) the chain is Lumenal. The helical transmembrane segment at 386–406 (PLILISLCLAMTGCSYGMNLT) threads the bilayer. Over 407-496 (STLIAIISSL…QKLVIKSYAT (90 aa)) the chain is Cytoplasmic. The chain crosses the membrane as a helical span at residues 497–517 (AFTWTFALVAIIAFAGFWCSL). The Lumenal segment spans residues 518–531 (RIKQFYLHTSVDRS).

It belongs to the major facilitator superfamily.

The protein localises to the vacuole membrane. In terms of biological role, efflux transporter. Confers resistance to a variety of toxic compounds. This chain is Multidrug resistance protein fnx1 (fnx1), found in Schizosaccharomyces pombe (strain 972 / ATCC 24843) (Fission yeast).